The sequence spans 457 residues: C4-dicarboxylate transport protein (457 aa).

The next 9 membrane-spanning stretches (helical) occupy residues 22-42 (FQVV…PAFA), 55-75 (LVKM…IAGM), 90-110 (VYFL…AHVV), 138-158 (LTLV…AFTG), 168-188 (GPNI…LALV), 209-229 (LVHI…AFTI), 242-262 (WLVG…LGVV), 335-357 (LFIA…LAVA), and 376-396 (AATL…ILGV).

It belongs to the dicarboxylate/amino acid:cation symporter (DAACS) (TC 2.A.23) family.

It is found in the cell inner membrane. Responsible for the transport of dicarboxylates such as succinate, fumarate, and malate from the periplasm across the membrane. The protein is C4-dicarboxylate transport protein of Xanthomonas oryzae pv. oryzae (strain MAFF 311018).